Consider the following 402-residue polypeptide: Argininosuccinate synthase (402 aa).

Residues 13–21 and Ala-40 each bind ATP; that span reads AYSGGLDTS. Tyr-91 and Ser-96 together coordinate L-citrulline. Gly-121 serves as a coordination point for ATP. Residues Thr-123, Asn-127, and Asp-128 each coordinate L-aspartate. Position 127 (Asn-127) interacts with L-citrulline. Arg-131, Ser-180, Ser-189, Glu-265, and Tyr-277 together coordinate L-citrulline.

This sequence belongs to the argininosuccinate synthase family. Type 1 subfamily. Homotetramer.

The protein localises to the cytoplasm. It catalyses the reaction L-citrulline + L-aspartate + ATP = 2-(N(omega)-L-arginino)succinate + AMP + diphosphate + H(+). The protein operates within amino-acid biosynthesis; L-arginine biosynthesis; L-arginine from L-ornithine and carbamoyl phosphate: step 2/3. The sequence is that of Argininosuccinate synthase from Leptospira biflexa serovar Patoc (strain Patoc 1 / Ames).